A 254-amino-acid chain; its full sequence is Urease accessory protein UreF (254 aa).

Residues 1–11 (MDKGKSVKSTE) show a composition bias toward basic and acidic residues. Residues 1–25 (MDKGKSVKSTEKSVGIPPKTPKTDN) are disordered.

The protein belongs to the UreF family. In terms of assembly, ureH, UreF and UreG form a complex that acts as a GTP-hydrolysis-dependent molecular chaperone, activating the urease apoprotein by helping to assemble the nickel containing metallocenter of UreC. The UreE protein probably delivers the nickel.

The protein resides in the cytoplasm. Its function is as follows. Required for maturation of urease via the functional incorporation of the urease nickel metallocenter. The chain is Urease accessory protein UreF from Helicobacter pylori (strain P12).